The following is a 539-amino-acid chain: BTB/POZ domain-containing protein 6 (539 aa).

An N-terminal signal peptide occupies residues 1–23 (MLLPLACLHGRVAQCLTSLLVLA). Residues 137–207 (ADVHFIVGAL…MYSDEIDLEA (71 aa)) enclose the BTB domain.

It localises to the cytoplasm. In terms of biological role, adapter protein for the cul3 E3 ubiquitin-protein ligase complex. Involved in late neuronal development and muscle formation. This is BTB/POZ domain-containing protein 6 (Btbd6) from Mus musculus (Mouse).